The following is a 372-amino-acid chain: Methylthioribose-1-phosphate isomerase 1 (372 aa).

Residue Asp254 is the Proton donor of the active site.

Belongs to the eIF-2B alpha/beta/delta subunits family. MtnA subfamily.

It localises to the cytoplasm. The protein resides in the nucleus. The enzyme catalyses 5-(methylsulfanyl)-alpha-D-ribose 1-phosphate = 5-(methylsulfanyl)-D-ribulose 1-phosphate. It participates in amino-acid biosynthesis; L-methionine biosynthesis via salvage pathway; L-methionine from S-methyl-5-thio-alpha-D-ribose 1-phosphate: step 1/6. Catalyzes the interconversion of methylthioribose-1-phosphate (MTR-1-P) into methylthioribulose-1-phosphate (MTRu-1-P). The polypeptide is Methylthioribose-1-phosphate isomerase 1 (Trypanosoma cruzi (strain CL Brener)).